The following is a 356-amino-acid chain: RuBisCO accumulation factor 1 (356 aa).

The N-terminal alpha-helix stretch occupies residues 9 to 192; it reads LSEEERQELL…RALIEALLLD (184 aa). A C-terminal beta-sheet region spans residues 216–342; it reads PRLLPFAGTL…LVLILRPKRV (127 aa).

This sequence belongs to the RAF family. In terms of assembly, homodimer. Forms an RbcL(8)-Raf1(8) complex. Forms complexes of many stoichiometries with RbcL with and without RbcS. RbcX and Raf1 can bind simultaneously to RbcL.

The protein localises to the cytoplasm. In terms of biological role, a major RuBisCO chaperone. Acts after GroEL-GroES chaperonin to fold and/or assemble the large subunit of RuBisCO (ccbL, rbcL). Cooperates with RbcX in RbcL folding, plays the major role in assembly of dimers into RbcL(8)-Raf1(8) intermediate complexes. RbcS replaces Raf1, leading to holoenzyme formation. Its function is as follows. The Raf1 dimer brackets an RbcL dimer, leading to RbcL(8)-Raf1(8) complex formation. RbcS displaces Raf1, resulting in holoenzyme formation. Probably plays a role in early carboxysome assembly; in its absence CcaA, CcmM, CcmN, RbcL and RbcS colocalize in small patches while the shell proteins CcmK2, CcmK3 and CcmK4 are found diffused in the cytoplasm. Functionally, it has been suggested that Raf1 and RbcX are partially functionally redundant. Other evidence suggests they are antagonistic in mediating RuBisCO assembly. This is RuBisCO accumulation factor 1 from Synechococcus elongatus (strain ATCC 33912 / PCC 7942 / FACHB-805) (Anacystis nidulans R2).